The primary structure comprises 301 residues: RNA polymerase II holoenzyme cyclin-like subunit (301 aa).

Residues 53 to 142 (QQLIKLGKRM…LGECEFALIS (90 aa)) form the Cyclin N-terminal domain.

It belongs to the cyclin family. Cyclin C subfamily. In terms of assembly, component of the srb8-11 complex, a regulatory module of the Mediator complex.

The protein localises to the nucleus. In terms of biological role, component of the srb8-11 complex. The srb8-11 complex is a regulatory module of the Mediator complex which is itself involved in regulation of basal and activated RNA polymerase II-dependent transcription. The srb8-11 complex may be involved in the transcriptional repression of a subset of genes regulated by Mediator. It may inhibit the association of the Mediator complex with RNA polymerase II to form the holoenzyme complex. The srb8-11 complex phosphorylates the C-terminal domain (CTD) of the largest subunit of RNA polymerase II. In Aspergillus oryzae (strain ATCC 42149 / RIB 40) (Yellow koji mold), this protein is RNA polymerase II holoenzyme cyclin-like subunit (ssn8).